The primary structure comprises 488 residues: Annexin A7 (488 aa).

The segment covering 1-18 (MSYPGYPPTGYPPFPGYP) has biased composition (pro residues). Disordered regions lie at residues 1 to 49 (MSYP…YPQV) and 71 to 150 (GYPG…NTES). The repeat-rich region stretch occupies residues 1 to 143 (MSYPGYPPTG…QYPGGQPTYP (143 aa)). The interval 5 to 20 (GYPPTGYPPFPGYPPA) is 3 X 5 AA tandem repeats of G-Y-P-P-X. Positions 89 to 102 (PGQGFGVPPGGAGF) are enriched in gly residues. Annexin repeat units follow at residues 185-256 (FDAM…ALFM), 257-328 (PPTY…SMCQ), 340-412 (QMAQ…TILQ), and 416-487 (NRPA…AIVG). The residue at position 233 (lysine 233) is an N6-acetyllysine.

The protein belongs to the annexin family. In terms of assembly, interacts with PDCD6.

Functionally, calcium/phospholipid-binding protein which promotes membrane fusion and is involved in exocytosis. The chain is Annexin A7 (ANXA7) from Macaca fascicularis (Crab-eating macaque).